Here is a 336-residue protein sequence, read N- to C-terminus: MASVAKARSPKSTQSNSLVYDLLVLSRFTKYNPLFTIFAGGMFLFVASFPTTAFSCLLAGSTLVGNGSDVTLTWVFRQTALCLSACYSFCGAGMVWNDWIDRDIDANVARTKDRPLASGRVTTTQAMLWMVFQMAVSWWLLHFMLDGKDVNNHMLPVVIGSFLYPFGKRPICSKFYFYPQYILGFTIAWPAVPGRTAIFHGQETFAESVQACMPLLNMVFFWTIFLNTAYSYQDVVDDRKMGVNSFYNVLGKHVHLLLCLLLVPVAVCVPMYLNQFHSTWLWVSWAGVWALSLLRQITRFDEKNPASGGSLHVDNFLLGAWTVVACTIELLMRYYS.

A helical membrane pass occupies residues Leu34–Phe54. Asn66 is a glycosylation site (N-linked (GlcNAc...) asparagine). 7 helical membrane passes run Ala80–Ile100, Gln125–Leu145, Tyr181–Gly201, Phe205–Phe225, His253–Leu273, Asn274–Leu294, and Leu311–Leu331.

It belongs to the UbiA prenyltransferase family. Requires Mg(2+) as cofactor.

It is found in the membrane. The protein operates within secondary metabolite biosynthesis; terpenoid biosynthesis. Functionally, polyprenyl transferase; part of the gene cluster that mediates the biosynthesis of the diterpenoid pyrones subglutinols A and B. The first step of the pathway is the synthesis of the alpha-pyrone moiety by the polyketide synthase dpasA via condensation of one acetyl-CoA starter unit with 3 malonyl-CoA units and 2 methylations. The alpha-pyrone is then combined with geranylgeranyl pyrophosphate (GGPP) formed by the GGPP synthase dpasD through the action of the prenyltransferase dpasC to yield a linear alpha-pyrone diterpenoid. Subsequent steps in the diterpenoid pyrone biosynthetic pathway involve the decalin core formation, which is initiated by the epoxidation of the C10-C11 olefin by the FAD-dependent oxidoreductase dpasE, and is followed by a cyclization cascade catalyzed by the terpene cyclase dpasB. The FAD-linked oxidoreductase dpasF is then involved in tetrahydrofuran (THF) ring formation at the C5 unit to complete the formation of subglutinols A and B. DpasF possesses also an additional catalytic ability of multi-step oxidations to generate a new DDP analog with an enone system at the C5 named FDDP A. This is Polyprenyl transferase dpasC from Apiospora sacchari (Arthrinium sacchari).